A 91-amino-acid polypeptide reads, in one-letter code: Sm-like protein LSM36B (91 aa).

Residues 14 to 86 enclose the Sm domain; it reads TPADFLKSIR…VLYISTTKGT (73 aa).

The protein belongs to the snRNP Sm proteins family. In terms of assembly, component of the heptameric LSM1-LSM7 complex that forms a seven-membered ring structure with a donut shape. The LSM subunits are arranged in the order LSM1, LSM2, LSM3, LSM6, LSM5, LSM7 and LSM4. Component of the heptameric LSM2-LSM8 complex that forms a seven-membered ring structure with a donut shape. The LSM subunits are arranged in the order LSM8, LSM2, LSM3, LSM6, LSM5, LSM7 and LSM4. LSM6B subunit interacts only with its two neighboring subunits, LSM3A or LSM3B and LSM5. As to expression, expressed in roots, leaves, stems, flowers and siliques.

The protein resides in the cytoplasm. It localises to the nucleus. Functionally, component of LSM protein complexes, which are involved in RNA processing. Component of the cytoplasmic LSM1-LSM7 complex which is involved in mRNA degradation by promoting decapping and leading to accurate 5'-3' mRNA decay. The cytoplasmic LSM1-LSM7 complex regulates developmental gene expression by the decapping of specific development-related transcripts. Component of the nuclear LSM2-LSM8 complex which is involved splicing nuclear mRNAs. LSM2-LSM8 binds directly to the U6 small nuclear RNAs (snRNAs) and is essential for accurate splicing of selected development-related mRNAs through the stabilization of the spliceosomal U6 snRNA. Plays a critical role in the regulation of development-related gene expression. The chain is Sm-like protein LSM36B from Arabidopsis thaliana (Mouse-ear cress).